A 69-amino-acid polypeptide reads, in one-letter code: UPF0346 protein llmg_2280 (69 aa).

This sequence belongs to the UPF0346 family.

This chain is UPF0346 protein llmg_2280, found in Lactococcus lactis subsp. cremoris (strain MG1363).